The primary structure comprises 342 residues: Methionine import ATP-binding protein MetN (342 aa).

An ABC transporter domain is found at 2–241; it reads ITLEQVTKIY…PQQPITKRFV (240 aa). 38-45 contacts ATP; sequence GYSGAGKS.

Belongs to the ABC transporter superfamily. Methionine importer (TC 3.A.1.24) family. In terms of assembly, the complex is composed of two ATP-binding proteins (MetN), two transmembrane proteins (MetI) and a solute-binding protein (MetQ).

The protein localises to the cell membrane. The catalysed reaction is L-methionine(out) + ATP + H2O = L-methionine(in) + ADP + phosphate + H(+). It catalyses the reaction D-methionine(out) + ATP + H2O = D-methionine(in) + ADP + phosphate + H(+). In terms of biological role, part of the ABC transporter complex MetNIQ involved in methionine import. Responsible for energy coupling to the transport system. This is Methionine import ATP-binding protein MetN from Geobacillus kaustophilus (strain HTA426).